A 302-amino-acid polypeptide reads, in one-letter code: tRNA dimethylallyltransferase (302 aa).

12–19 (GPTASGKS) is a binding site for ATP. Residue 14–19 (TASGKS) coordinates substrate. An interaction with substrate tRNA region spans residues 37-40 (DSMQ).

It belongs to the IPP transferase family. As to quaternary structure, monomer. It depends on Mg(2+) as a cofactor.

It catalyses the reaction adenosine(37) in tRNA + dimethylallyl diphosphate = N(6)-dimethylallyladenosine(37) in tRNA + diphosphate. Catalyzes the transfer of a dimethylallyl group onto the adenine at position 37 in tRNAs that read codons beginning with uridine, leading to the formation of N6-(dimethylallyl)adenosine (i(6)A). This Corynebacterium diphtheriae (strain ATCC 700971 / NCTC 13129 / Biotype gravis) protein is tRNA dimethylallyltransferase.